A 407-amino-acid polypeptide reads, in one-letter code: Na(+)-translocating NADH-quinone reductase subunit F (407 aa).

Residues 3-23 form a helical membrane-spanning segment; the sequence is IILGVVMFTLIVLALVLVILF. In terms of domain architecture, 2Fe-2S ferredoxin-type spans 32–126; the sequence is GDITISINGD…DMDIELPEEI (95 aa). Residues C69, C75, C78, and C110 each coordinate [2Fe-2S] cluster. Residues 129-269 enclose the FAD-binding FR-type domain; sequence VKKWECTVIS…SGPFGEFFAK (141 aa). A catalytic region spans residues 272–389; the sequence is DAEMVFIGGG…PMMNAAVIGM (118 aa).

Belongs to the NqrF family. In terms of assembly, composed of six subunits; NqrA, NqrB, NqrC, NqrD, NqrE and NqrF. [2Fe-2S] cluster serves as cofactor. The cofactor is FAD.

The protein localises to the cell inner membrane. The enzyme catalyses a ubiquinone + n Na(+)(in) + NADH + H(+) = a ubiquinol + n Na(+)(out) + NAD(+). Its function is as follows. NQR complex catalyzes the reduction of ubiquinone-1 to ubiquinol by two successive reactions, coupled with the transport of Na(+) ions from the cytoplasm to the periplasm. The first step is catalyzed by NqrF, which accepts electrons from NADH and reduces ubiquinone-1 to ubisemiquinone by a one-electron transfer pathway. The chain is Na(+)-translocating NADH-quinone reductase subunit F from Vibrio anguillarum (Listonella anguillarum).